Reading from the N-terminus, the 140-residue chain is MNTGATLIELLAVALGGGTGAAARYVLDTHLKSKHGWAPLWSLAVVNLLGTVVLGLVLGYTSQHLDGAAGSTSAGETQDILYPLLGIGLAGGFTTFSTVMVEVFTRPQPARRIAGVVGMAVVCCAVFLPALWCGALLAGA.

Helical transmembrane passes span 3–23 (TGATLIELLAVALGGGTGAAA), 38–58 (APLWSLAVVNLLGTVVLGLVL), 80–100 (ILYPLLGIGLAGGFTTFSTVM), and 113–133 (IAGVVGMAVVCCAVFLPALWC). The Na(+) site is built by G91 and T94.

It belongs to the fluoride channel Fluc/FEX (TC 1.A.43) family.

It is found in the cell membrane. It carries out the reaction fluoride(in) = fluoride(out). With respect to regulation, na(+) is not transported, but it plays an essential structural role and its presence is essential for fluoride channel function. Fluoride-specific ion channel. Important for reducing fluoride concentration in the cell, thus reducing its toxicity. This Corynebacterium jeikeium (strain K411) protein is Fluoride-specific ion channel FluC 1.